The following is a 368-amino-acid chain: Probable pectate lyase 4 (368 aa).

Positions 1–25 (MASLVVIVSLLLAAFASPLLETAHS) are cleaved as a signal peptide. N27 carries N-linked (GlcNAc...) asparagine glycosylation. Residues D167, D191, and D195 each coordinate Ca(2+). R247 is an active-site residue.

The protein belongs to the polysaccharide lyase 1 family. Ca(2+) serves as cofactor.

It carries out the reaction Eliminative cleavage of (1-&gt;4)-alpha-D-galacturonan to give oligosaccharides with 4-deoxy-alpha-D-galact-4-enuronosyl groups at their non-reducing ends.. It functions in the pathway glycan metabolism; pectin degradation; 2-dehydro-3-deoxy-D-gluconate from pectin: step 2/5. The protein is Probable pectate lyase 4 of Arabidopsis thaliana (Mouse-ear cress).